The following is a 42-amino-acid chain: Photosystem II reaction center protein J (42 aa).

Residues 10-30 traverse the membrane as a helical segment; it reads IPLWLVGTVAGTAAIGLLGIF.

The protein belongs to the PsbJ family. As to quaternary structure, PSII is composed of 1 copy each of membrane proteins PsbA, PsbB, PsbC, PsbD, PsbE, PsbF, PsbH, PsbI, PsbJ, PsbK, PsbL, PsbM, PsbT, PsbX, PsbY, PsbZ, Psb30/Ycf12, at least 3 peripheral proteins of the oxygen-evolving complex and a large number of cofactors. It forms dimeric complexes.

It is found in the plastid. Its subcellular location is the chloroplast thylakoid membrane. Functionally, one of the components of the core complex of photosystem II (PSII). PSII is a light-driven water:plastoquinone oxidoreductase that uses light energy to abstract electrons from H(2)O, generating O(2) and a proton gradient subsequently used for ATP formation. It consists of a core antenna complex that captures photons, and an electron transfer chain that converts photonic excitation into a charge separation. This Pleurastrum terricola (Filamentous green alga) protein is Photosystem II reaction center protein J.